The primary structure comprises 337 residues: Glyceraldehyde-3-phosphate dehydrogenase (337 aa).

NAD(+)-binding positions include 11–12 (RI), aspartate 33, and lysine 78. D-glyceraldehyde 3-phosphate is bound by residues 149 to 151 (SCT), threonine 180, 209 to 210 (TG), and arginine 232. The active-site Nucleophile is cysteine 150. Asparagine 314 serves as a coordination point for NAD(+).

It belongs to the glyceraldehyde-3-phosphate dehydrogenase family. As to quaternary structure, homotetramer.

It localises to the cytoplasm. The catalysed reaction is D-glyceraldehyde 3-phosphate + phosphate + NAD(+) = (2R)-3-phospho-glyceroyl phosphate + NADH + H(+). It functions in the pathway carbohydrate degradation; glycolysis; pyruvate from D-glyceraldehyde 3-phosphate: step 1/5. The chain is Glyceraldehyde-3-phosphate dehydrogenase (GPD) from Lyophyllum shimeji (Hon-shimeji).